The primary structure comprises 373 residues: Erythronate-4-phosphate dehydrogenase (373 aa).

The substrate site is built by S45 and T67. NAD(+) contacts are provided by residues D147, 207–209 (ASR), and D233. R209 is a catalytic residue. E238 is a catalytic residue. The active-site Proton donor is the H255. G258 provides a ligand contact to NAD(+).

It belongs to the D-isomer specific 2-hydroxyacid dehydrogenase family. PdxB subfamily. In terms of assembly, homodimer.

The protein localises to the cytoplasm. It catalyses the reaction 4-phospho-D-erythronate + NAD(+) = (R)-3-hydroxy-2-oxo-4-phosphooxybutanoate + NADH + H(+). It functions in the pathway cofactor biosynthesis; pyridoxine 5'-phosphate biosynthesis; pyridoxine 5'-phosphate from D-erythrose 4-phosphate: step 2/5. Its function is as follows. Catalyzes the oxidation of erythronate-4-phosphate to 3-hydroxy-2-oxo-4-phosphonooxybutanoate. In Pseudoalteromonas translucida (strain TAC 125), this protein is Erythronate-4-phosphate dehydrogenase.